Here is a 234-residue protein sequence, read N- to C-terminus: Protein UL20 homolog (234 aa).

Transmembrane regions (helical) follow at residues 82–102, 112–132, 153–173, and 191–211; these read VVLF…IFLF, FLIL…LEMY, IGAL…NMIF, and TSGF…ITSI.

Belongs to the alphaherpesvirinae UL20 family. Interacts with gK (via N-terminus); this interaction plays a role in the coordinate transport of UL20 and gK to the trans-Golgi network (TGN), and is required for their cell surface expression. Interacts with gB.

The protein resides in the virion. It is found in the host cell membrane. It localises to the host endosome membrane. The protein localises to the host Golgi apparatus membrane. Its subcellular location is the host nucleus membrane. Functionally, plays an essential role in egress of virus particles from the nucleus, cytoplasmic envelopment and virus-induced cell fusion. Forms a functional protein complex with gK and this interaction is absolutely essential for their coordinate intracellular transport, gK glycosylation, expression on host cell surface, and function. Together, they modulate gB-mediated virus-induced cell fusion and virion egress and therefore actively participate in these processes. This Gallid herpesvirus 2 (strain Chicken/Md5/ATCC VR-987) (GaHV-2) protein is Protein UL20 homolog (MDV032).